We begin with the raw amino-acid sequence, 339 residues long: Phenylalanine--tRNA ligase alpha subunit (339 aa).

Glu254 provides a ligand contact to Mg(2+).

Belongs to the class-II aminoacyl-tRNA synthetase family. Phe-tRNA synthetase alpha subunit type 1 subfamily. As to quaternary structure, tetramer of two alpha and two beta subunits. The cofactor is Mg(2+).

The protein resides in the cytoplasm. It catalyses the reaction tRNA(Phe) + L-phenylalanine + ATP = L-phenylalanyl-tRNA(Phe) + AMP + diphosphate + H(+). This Desulforudis audaxviator (strain MP104C) protein is Phenylalanine--tRNA ligase alpha subunit.